Consider the following 288-residue polypeptide: Cyclic UMP-AMP synthase (288 aa).

Residues 1 to 23 (MPVPESQLERWSHQGATTTAKKT) are disordered. Gln-46 is a UTP binding site. Position 46-48 (46-48 (QGS)) interacts with ATP. Positions 60 and 62 each coordinate Mg(2+). UTP-binding positions include Asp-62 and 116–120 (RKTLK). Asp-129 is a binding site for Mg(2+). Asn-166 serves as a coordination point for UTP. 3 residues coordinate ATP: Lys-194, Ser-212, and Glu-265.

Belongs to the CD-NTase family. E01 subfamily. The cofactor is Mg(2+).

The catalysed reaction is UTP + ATP = 3',3'-cUAMP + 2 diphosphate. Its function is as follows. Cyclic nucleotide synthase (second messenger synthase) of a CBASS antivirus system. CBASS (cyclic oligonucleotide-based antiphage signaling system) provides immunity against bacteriophage. The CD-NTase protein synthesizes cyclic nucleotides in response to infection; these serve as specific second messenger signals. The signals activate a diverse range of effectors, leading to bacterial cell death and thus abortive phage infection. A type I-B(UU) CBASS system. Cyclic dinucleotide synthase that catalyzes the synthesis of 3'3'-cyclic UMP-AMP (cUMP-AMP) from UTP and ATP, a second messenger for cell signal transduction. This is Cyclic UMP-AMP synthase from Rhodothermus marinus (strain SG0.5JP17-172).